Reading from the N-terminus, the 377-residue chain is Guanine nucleotide exchange factor for Rab-3A (377 aa).

The tract at residues 23–57 (WKNLGPSKGNRKSPGGLVEASASWEEAGGEEHPAA) is disordered. A coiled-coil region spans residues 77–128 (SEFLKEELYKAQKELKLKDEECERLCKVRAQLEQELEELTASLFEEAHKMVR). The disordered stretch occupies residues 167-198 (PASPNRELHPQLLSPTKAGPRKGHSRQKSTSS). Phosphoserine is present on residues serine 169 and serine 180.

It belongs to the SEC2 family. As to quaternary structure, interacts with RAB3A and IHPK1 through the coiled-coil domain. This interaction is competitive. IHPK1 kinase activity is not required for this interaction. As to expression, selectively localized to the brain (at protein level).

Guanine nucleotide exchange factor (GEF) which may activate RAB3A, a GTPase that regulates synaptic vesicle exocytosis. Promotes the exchange of GDP to GTP, converting inactive GDP-bound Rab proteins into their active GTP-bound form. May also activate RAB8A and RAB8B. This chain is Guanine nucleotide exchange factor for Rab-3A (Rab3il1), found in Rattus norvegicus (Rat).